The chain runs to 520 residues: 2-methylcitrate dehydratase, mitochondrial (520 aa).

The N-terminal 37 residues, 1-37 (MRAFRSAANFGAASNIYRKSFTPASIASNRFVSARMS), are a transit peptide targeting the mitochondrion.

The protein belongs to the PrpD family. As to quaternary structure, monomer.

The protein localises to the mitochondrion. The catalysed reaction is (2S,3S)-2-methylcitrate = 2-methyl-cis-aconitate + H2O. It participates in organic acid metabolism; propanoate degradation. Several bivalent metal ions, such as nickel, copper, zinc, mercury, and lead, inhibit the activity to some extent. Inhibited by structural analogs such as citrate, cis-aconitate, isocitrate, 2-methylisocitrate, tricarballylate and fluorocitrate, but not by trans-aconitate or adipate. Component of the methylcitrate cycle that catalyzes the dehydration of 2-methylcitrate to 2-methyl-cis-aconitate. The methylcitrate cycle is a metabolic pathway for the consumption of propionic acid. In Yarrowia lipolytica (strain CLIB 122 / E 150) (Yeast), this protein is 2-methylcitrate dehydratase, mitochondrial.